A 205-amino-acid chain; its full sequence is Ribosomal RNA small subunit methyltransferase G (205 aa).

S-adenosyl-L-methionine-binding positions include glycine 73, leucine 78, valine 124–glutamate 125, and arginine 139.

The protein belongs to the methyltransferase superfamily. RNA methyltransferase RsmG family.

The protein localises to the cytoplasm. The enzyme catalyses guanosine(527) in 16S rRNA + S-adenosyl-L-methionine = N(7)-methylguanosine(527) in 16S rRNA + S-adenosyl-L-homocysteine. Its function is as follows. Specifically methylates the N7 position of guanine in position 527 of 16S rRNA. The protein is Ribosomal RNA small subunit methyltransferase G of Erwinia tasmaniensis (strain DSM 17950 / CFBP 7177 / CIP 109463 / NCPPB 4357 / Et1/99).